The following is a 103-amino-acid chain: Enhancer of rudimentary homolog (103 aa).

It belongs to the E(R) family. Homodimer.

Functionally, may have a role in the cell cycle. The chain is Enhancer of rudimentary homolog from Caenorhabditis elegans.